Here is a 98-residue protein sequence, read N- to C-terminus: Co-chaperonin GroES (98 aa).

It belongs to the GroES chaperonin family. In terms of assembly, heptamer of 7 subunits arranged in a ring. Interacts with the chaperonin GroEL.

It localises to the cytoplasm. Together with the chaperonin GroEL, plays an essential role in assisting protein folding. The GroEL-GroES system forms a nano-cage that allows encapsulation of the non-native substrate proteins and provides a physical environment optimized to promote and accelerate protein folding. GroES binds to the apical surface of the GroEL ring, thereby capping the opening of the GroEL channel. The polypeptide is Co-chaperonin GroES (Kineococcus radiotolerans (strain ATCC BAA-149 / DSM 14245 / SRS30216)).